A 143-amino-acid polypeptide reads, in one-letter code: Transcriptional regulator MraZ (143 aa).

2 SpoVT-AbrB domains span residues 5 to 47 and 76 to 119; these read EYFH…PVSA and ASNQ…DKEK.

Belongs to the MraZ family. Forms oligomers.

It is found in the cytoplasm. Its subcellular location is the nucleoid. The protein is Transcriptional regulator MraZ of Finegoldia magna (strain ATCC 29328 / DSM 20472 / WAL 2508) (Peptostreptococcus magnus).